The chain runs to 76 residues: Exodeoxyribonuclease 7 small subunit (76 aa).

Belongs to the XseB family. As to quaternary structure, heterooligomer composed of large and small subunits.

Its subcellular location is the cytoplasm. The enzyme catalyses Exonucleolytic cleavage in either 5'- to 3'- or 3'- to 5'-direction to yield nucleoside 5'-phosphates.. Functionally, bidirectionally degrades single-stranded DNA into large acid-insoluble oligonucleotides, which are then degraded further into small acid-soluble oligonucleotides. The sequence is that of Exodeoxyribonuclease 7 small subunit from Staphylococcus epidermidis (strain ATCC 35984 / DSM 28319 / BCRC 17069 / CCUG 31568 / BM 3577 / RP62A).